A 461-amino-acid chain; its full sequence is Chromosomal replication initiator protein DnaA (461 aa).

The tract at residues 1 to 90 is domain I, interacts with DnaA modulators; the sequence is MAVSLWQQCI…RPSARPVAPA (90 aa). Residues 91 to 124 are domain II; the sequence is PVAAKPVNRQTKAQVGTTSFNTQAEPIINPNHRS. The segment at 125–341 is domain III, AAA+ region; that stretch reads NINPTYQFDN…GALNRVIANA (217 aa). Residues glycine 169, glycine 171, lysine 172, and threonine 173 each contribute to the ATP site. A domain IV, binds dsDNA region spans residues 342–461; the sequence is NFTGRPITID…YANLIRTLSS (120 aa).

Belongs to the DnaA family. In terms of assembly, oligomerizes as a right-handed, spiral filament on DNA at oriC.

The protein resides in the cytoplasm. Its function is as follows. Plays an essential role in the initiation and regulation of chromosomal replication. ATP-DnaA binds to the origin of replication (oriC) to initiate formation of the DNA replication initiation complex once per cell cycle. Binds the DnaA box (a 9 base pair repeat at the origin) and separates the double-stranded (ds)DNA. Forms a right-handed helical filament on oriC DNA; dsDNA binds to the exterior of the filament while single-stranded (ss)DNA is stabiized in the filament's interior. The ATP-DnaA-oriC complex binds and stabilizes one strand of the AT-rich DNA unwinding element (DUE), permitting loading of DNA polymerase. After initiation quickly degrades to an ADP-DnaA complex that is not apt for DNA replication. Binds acidic phospholipids. The protein is Chromosomal replication initiator protein DnaA of Shewanella frigidimarina (strain NCIMB 400).